Consider the following 267-residue polypeptide: Protein COFACTOR ASSEMBLY OF COMPLEX C SUBUNIT B CCB1, chloroplastic (267 aa).

The transit peptide at 1–44 (MATKLISPPLSCPWVTSREVIIKGLPRRRREWMVTKRNRVSAVT) directs the protein to the chloroplast. The Lumenal segment spans residues 45–84 (AMIVEPLSVVSSSAIQIHQWWEQNPNSLLLMTEATGGYSL). A helical membrane pass occupies residues 85-105 (ASYYTSLGLFVISVPGLWSLI). Over 106–164 (KRSVKSKIVRKTFVVNDVKKEPKQVAGEILSFFTRKNFNITDRGETITFEGKMVPSRGQ) the chain is Stromal. The helical transmembrane segment at 165 to 185 (AALLTFCTCISLASVGLVLTI) threads the bilayer. Threonine 186 is a topological domain (lumenal). The chain crosses the membrane as a helical span at residues 187–207 (VPDFGNNWFFIILLSPLAGVY). Over 208–267 (YWKKASRKEEIKVKMMVGSKGRLDEIVVQGDDVQVEEMRKELQLNEKGMVYVKGLFERSS) the chain is Stromal.

It is found in the plastid. The protein localises to the chloroplast thylakoid membrane. In terms of biological role, required for the biogenesis and accumulation of native cytochrome b6 in the thylakoid membrane. Controls the conversion of apocytochrome b6 to holocytochrome b6. Required for covalent binding of the c-type heme to cytochrome b6. This is Protein COFACTOR ASSEMBLY OF COMPLEX C SUBUNIT B CCB1, chloroplastic from Arabidopsis thaliana (Mouse-ear cress).